The sequence spans 321 residues: Glucokinase (321 aa).

8–13 (GDVGGT) contacts ATP.

Belongs to the bacterial glucokinase family.

Its subcellular location is the cytoplasm. It catalyses the reaction D-glucose + ATP = D-glucose 6-phosphate + ADP + H(+). The polypeptide is Glucokinase (Klebsiella pneumoniae (strain 342)).